Consider the following 207-residue polypeptide: Dephospho-CoA kinase (207 aa).

A DPCK domain is found at 10-207 (ILGLTGGIGS…FYLTLRGGQS (198 aa)). ATP is bound at residue 18-23 (GSGKSA).

This sequence belongs to the CoaE family.

The protein localises to the cytoplasm. The enzyme catalyses 3'-dephospho-CoA + ATP = ADP + CoA + H(+). Its pathway is cofactor biosynthesis; coenzyme A biosynthesis; CoA from (R)-pantothenate: step 5/5. Its function is as follows. Catalyzes the phosphorylation of the 3'-hydroxyl group of dephosphocoenzyme A to form coenzyme A. The chain is Dephospho-CoA kinase from Pseudomonas syringae pv. tomato (strain ATCC BAA-871 / DC3000).